Consider the following 444-residue polypeptide: 3-phosphoshikimate 1-carboxyvinyltransferase (444 aa).

Positions 32, 33, and 37 each coordinate 3-phosphoshikimate. Phosphoenolpyruvate is bound at residue lysine 32. Phosphoenolpyruvate contacts are provided by glycine 105 and arginine 133. Positions 178, 180, 326, and 353 each coordinate 3-phosphoshikimate. Residue glutamine 180 participates in phosphoenolpyruvate binding. Aspartate 326 acts as the Proton acceptor in catalysis. 2 residues coordinate phosphoenolpyruvate: arginine 357 and arginine 398.

This sequence belongs to the EPSP synthase family. As to quaternary structure, monomer.

Its subcellular location is the cytoplasm. The catalysed reaction is 3-phosphoshikimate + phosphoenolpyruvate = 5-O-(1-carboxyvinyl)-3-phosphoshikimate + phosphate. Its pathway is metabolic intermediate biosynthesis; chorismate biosynthesis; chorismate from D-erythrose 4-phosphate and phosphoenolpyruvate: step 6/7. Functionally, catalyzes the transfer of the enolpyruvyl moiety of phosphoenolpyruvate (PEP) to the 5-hydroxyl of shikimate-3-phosphate (S3P) to produce enolpyruvyl shikimate-3-phosphate and inorganic phosphate. The protein is 3-phosphoshikimate 1-carboxyvinyltransferase of Nitrosococcus oceani (strain ATCC 19707 / BCRC 17464 / JCM 30415 / NCIMB 11848 / C-107).